The chain runs to 222 residues: Latexin (222 aa).

The 97-residue stretch at 1 to 97 (MEIPPTNYPA…NFTFEGETGK (97 aa)) folds into the Cystatin LXN-type 1 domain. Lys-55 carries the post-translational modification N6-acetyllysine. The interval 98–117 (NPDEEDNTFYQRLKSMKEPL) is alpha-helical linker. The Cystatin LXN-type 2 domain maps to 118–222 (EAQNIPDNFG…SRLPKEVQLE (105 aa)).

This sequence belongs to the protease inhibitor I47 (latexin) family. In terms of tissue distribution, highly expressed in heart, prostate, ovary, kidney, pancreas, and colon, moderate or low in other tissues including brain.

It is found in the cytoplasm. In terms of biological role, hardly reversible, non-competitive, and potent inhibitor of CPA1, CPA2 and CPA4. May play a role in inflammation. The sequence is that of Latexin (LXN) from Homo sapiens (Human).